The chain runs to 360 residues: Homeobox protein ceh-60 (360 aa).

The PBC-A stretch occupies residues 1–82 (MDNLIKQLQM…ENPTFPLEEV (82 aa)). Positions 1-179 (MDNLIKQLQM…ILVLRREIEQ (179 aa)) constitute a PBC domain. The interval 85–179 (EKDEEWQPLE…ILVLRREIEQ (95 aa)) is PBC-B. The homeobox DNA-binding region spans 180–242 (QGRKRRNFDK…NQRIRTKQQA (63 aa)).

This sequence belongs to the TALE/PBX homeobox family. In terms of assembly, forms a heterodimer with homeobox unc-62. Interacts with pqm-1.

The protein localises to the nucleus. Functionally, probable transcription regulator which binds to DNA, repressing genes involved in longevity and stress, while activating genes involved in reproduction, such as the vitellogenins. Associates with homeobox unc-62 to regulate gene expression, including repression of genes involved in innate immunity. Required for intestinal expression of vitellogenin genes. Negatively modulates longevity, probably independently of effects on vitellogenesis. Involved in lipid homeostasis, contributing to the reallocation of intestinal lipids to the germline and to the formation of the cuticle. Associates with transcriptional regulator pqm-1 at the daf-16 associated element within the promoters of stress-responsive genes to regulate expression. This Caenorhabditis elegans protein is Homeobox protein ceh-60.